Consider the following 293-residue polypeptide: Probable flavonol synthase 6 (293 aa).

In terms of domain architecture, Fe2OG dioxygenase spans 156–253 (KAQYVMRINY…RMSWPILVEP (98 aa)). Residue 164–166 (NYY) participates in 2-oxoglutarate binding. His-178, Asp-180, and His-234 together coordinate Fe cation. 244–246 (RMS) contributes to the 2-oxoglutarate binding site.

This sequence belongs to the iron/ascorbate-dependent oxidoreductase family. Fe(2+) serves as cofactor.

The catalysed reaction is a (2R,3R)-dihydroflavonol + 2-oxoglutarate + O2 = a flavonol + succinate + CO2 + H2O. It participates in secondary metabolite biosynthesis; flavonoid biosynthesis. This chain is Probable flavonol synthase 6 (FLS6), found in Arabidopsis thaliana (Mouse-ear cress).